The following is a 351-amino-acid chain: Calcium release-activated calcium channel protein 1 (351 aa).

Over residues 1-21 the composition is skewed to polar residues; the sequence is MSVWTTANNSGLETPTKSPIT. Disordered stretches follow at residues 1-39 and 71-141; these read MSVW…TGNH and HAHP…EDLH. Topologically, residues 1–163 are cytoplasmic; it reads MSVWTTANNS…SRAKLKASSK (163 aa). Composition is skewed to low complexity over residues 22–33 and 80–93; these read SSVPRAARSSAV and SNSP…SNNS. Polar residues predominate over residues 94–106; it reads AGFQRTSISNSLL. Residues 164–181 form a helical membrane-spanning segment; that stretch reads TSALLSGFAMVAMVEVQL. The Extracellular portion of the chain corresponds to 182-191; it reads DHDTNVPPGM. Residues 192–212 form a helical membrane-spanning segment; the sequence is LIAFAICTTLLVAVHMLALMI. The Cytoplasmic portion of the chain corresponds to 213-248; sequence STCILPNIETVCNLHSISLVHESPHERLHWYIETAW. Residues 249 to 269 form a helical membrane-spanning segment; that stretch reads AFSTLLGLILFLLEIAILCWV. Over 270-277 the chain is Extracellular; sequence KFYDLSPP. The chain crosses the membrane as a helical span at residues 278 to 298; that stretch reads AAWSACVVLIPVMIIFMAFAI. Over 299–351 the chain is Cytoplasmic; the sequence is HFYRSLVSHKYEVTVSGIRELEMLKEQMEQDHLEHHNNIRNNGMNYGASGDIV.

This sequence belongs to the Orai family. As to quaternary structure, hexamer.

It is found in the cell membrane. The catalysed reaction is Ca(2+)(in) = Ca(2+)(out). Pore-forming subunit of inward rectifying Ca(2+) release-activated Ca(2+) (CRAC) channels. Assembles in hexameric CRAC channels that mediate Ca(2+) influx upon depletion of endoplasmic reticulum Ca(2+) store and channel activation by Ca(2+) sensor Stim, a process known as store-operated Ca(2+) entry (SOCE). Regulates transcription factor NFAT nuclear import. The polypeptide is Calcium release-activated calcium channel protein 1 (Drosophila melanogaster (Fruit fly)).